Here is a 529-residue protein sequence, read N- to C-terminus: Delayed-rectifier potassium channel regulatory subunit KCNS1 (529 aa).

At 1-217 the chain is on the cytoplasmic side; it reads MLMLLVRGTH…LTMENPGYSL (217 aa). The chain crosses the membrane as a helical span at residues 218-239; sequence PSKLFSCVSIGVVLASIAAMCI. The Extracellular segment spans residues 240–270; sequence HSLPEYQAREAAAAVATVAAGRSAEDVRDDP. A helical membrane pass occupies residues 271–293; it reads VLRRLEYFCIAWFSFEVSSRLLL. Topologically, residues 294–304 are cytoplasmic; it reads APSTRNFFCHP. A helical membrane pass occupies residues 305–322; sequence LNLIDIVSVLPFYLTLLA. Residues 323–342 are Extracellular-facing; the sequence is SVALGGNNHGGTSGEELGHL. Residues 343-363 form a helical; Voltage-sensor membrane-spanning segment; the sequence is GKVVQVFRLMRIFRVLKLARH. Residues 364-378 lie on the Cytoplasmic side of the membrane; sequence STGLRSLGATLKHSY. Residues 379 to 400 form a helical membrane-spanning segment; that stretch reads REVGILLLYLAVGVSVFSGVAY. Residues 401 to 413 are Extracellular-facing; sequence TAEKEEDVGFDTI. The helical intramembrane region spans 414–425; the sequence is PACWWWGTVSMT. Residues 426–431 carry the Selectivity filter motif; that stretch reads TVGYGD. An intramembrane segment occupies 426-433; sequence TVGYGDVV. The Extracellular portion of the chain corresponds to 434-440; that stretch reads PVTLAGK. A helical membrane pass occupies residues 441-469; the sequence is LAASGCILGGILVVALPITIIFNKFSHFY. At 470 to 529 the chain is on the cytoplasmic side; sequence QRQKALEAAVRNSGHREFEDLLSSVDGVSDASLETSRETSQEGRSADLEAPSESPKPQIY. The segment at 498 to 529 is disordered; it reads SDASLETSRETSQEGRSADLEAPSESPKPQIY. Basic and acidic residues predominate over residues 504–516; the sequence is TSRETSQEGRSAD.

The protein belongs to the potassium channel family. S (TC 1.A.1.2) subfamily. Kv9.1/KCNS1 sub-subfamily. As to quaternary structure, heterotetramer with KCNB1. Heterotetramer with KCNB2. Does not form homomultimers.

Its subcellular location is the cell membrane. In terms of biological role, potassium channel regulatory subunit that modulate the delayed rectifier voltage-gated potassium channel activity of KCNB1 and KCNB2 by altering their kinetics, expression levels, and shifting the half-inactivation potential to more polarized values. While it does not form functional channels on its own, it can form functional heterotetrameric channels with KCNB1 and KCNB2. Each regulatory subunit has unique regulatory properties that can lead to extensive inhibition, significant changes in kinetics, and/or substantial shifts in the voltage dependencies of the inactivation process. This chain is Delayed-rectifier potassium channel regulatory subunit KCNS1, found in Lemur catta (Ring-tailed lemur).